We begin with the raw amino-acid sequence, 345 residues long: Leucine-rich repeat and transmembrane domain-containing protein 1 (345 aa).

An N-terminal signal peptide occupies residues 1–27; sequence MKGELLLFSSVIVLLQVVCSCPDKCYC. One can recognise an LRRNT domain in the interval 28–50; sequence QSSTNFVDCSQQGLAEIPSHLPP. Residues 28–288 lie on the Extracellular side of the membrane; sequence QSSTNFVDCS…PANLRHAIAT (261 aa). 5 LRR repeats span residues 51–72, 75–96, 99–120, 123–144, and 147–168; these read QTRTLHLQDNQIHHLPAFAFRS, WLMTLNLSNNSLSNLAPGAFHG, HLQVLNLTQNSLLSLESRLFHS, QLRELDLSSNNISHLPTSLGET, and NLTILAVQQNQLQQLDRALLES. Asn104 carries an N-linked (GlcNAc...) asparagine glycan. Residue Asn147 is glycosylated (N-linked (GlcNAc...) asparagine). Positions 180–234 constitute an LRRCT domain; the sequence is NLWKCNCHLLGLKLWLEKFVYKGGLTDGIICESPDTWKGKDLLRIPHELYQPCPL. A helical transmembrane segment spans residues 289 to 309; the sequence is VIITGVVCGIVCLMMLAAAIY. At 310–345 the chain is on the cytoplasmic side; sequence GCTYAAITAQYHGGPLAQTNDPGKVEEKERFDSSPA. The disordered stretch occupies residues 326–345; the sequence is AQTNDPGKVEEKERFDSSPA. Basic and acidic residues predominate over residues 332–345; the sequence is GKVEEKERFDSSPA.

The protein resides in the membrane. The polypeptide is Leucine-rich repeat and transmembrane domain-containing protein 1 (LRTM1) (Homo sapiens (Human)).